The chain runs to 136 residues: Glutamyl-tRNA(Gln) amidotransferase subunit C, mitochondrial (136 aa).

The protein belongs to the GatC family. Subunit of the heterotrimeric GatCAB amidotransferase (AdT) complex, composed of A (QRSL1), B (GATB) and C (GATC) subunits.

The protein resides in the mitochondrion. It carries out the reaction L-glutamyl-tRNA(Gln) + L-glutamine + ATP + H2O = L-glutaminyl-tRNA(Gln) + L-glutamate + ADP + phosphate + H(+). In terms of biological role, allows the formation of correctly charged Gln-tRNA(Gln) through the transamidation of misacylated Glu-tRNA(Gln) in the mitochondria. The reaction takes place in the presence of glutamine and ATP through an activated gamma-phospho-Glu-tRNA(Gln). The chain is Glutamyl-tRNA(Gln) amidotransferase subunit C, mitochondrial from Homo sapiens (Human).